The sequence spans 313 residues: Syndecan-1 (313 aa).

The N-terminal stretch at Met1 to Pro22 is a signal peptide. The Extracellular segment spans residues Gln23–Gly257. Disordered stretches follow at residues Ala27 to Ser58 and Ala95 to Gly186. The segment covering Glu32–Asp42 has biased composition (acidic residues). An O-linked (Xyl...) (chondroitin sulfate) serine glycan is attached at Ser37. Asn43 is a glycosylation site (N-linked (GlcNAc...) asparagine). O-linked (Xyl...) (heparan sulfate) serine glycosylation is found at Ser45 and Ser47. The segment covering Glu97–Glu129 has biased composition (basic and acidic residues). Over residues Val135–Ser154 the composition is skewed to low complexity. O-linked (Xyl...) (chondroitin sulfate) serine glycosylation is found at Ser209 and Ser219. A helical transmembrane segment spans residues Gly258–Leu278. Residues Tyr279–Ala313 lie on the Cytoplasmic side of the membrane. Over residues Glu286–Lys295 the composition is skewed to basic and acidic residues. Residues Glu286–Ala313 are disordered. Ser288 is modified (phosphoserine).

It belongs to the syndecan proteoglycan family. As to quaternary structure, interacts with CDCP1. Interacts (via C-terminus) with TIAM1 (via PDZ domain). Interacts with MDK. Shedding is enhanced by a number of factors such as heparanase, thrombin or EGF. Also by stress and wound healing. PMA-mediated shedding is inhibited by TIMP3.

The protein localises to the membrane. It localises to the secreted. The protein resides in the extracellular exosome. Functionally, cell surface proteoglycan that contains both heparan sulfate and chondroitin sulfate and that links the cytoskeleton to the interstitial matrix. Regulates exosome biogenesis in concert with SDCBP and PDCD6IP. Able to induce its own expression in dental mesenchymal cells and also in the neighboring dental epithelial cells via an MSX1-mediated pathway. This Rattus norvegicus (Rat) protein is Syndecan-1.